Consider the following 133-residue polypeptide: MGFYQGPDNRKITGGLKGKHRDKRKYEIGNPSTLTTLSAEDIRIKDRTLGGNFKVRLKYTTTANVLDPATNTAKKVKILEVLETPANKELARRGIIIRGAKIRTEAGLAVVTSRPGQDGVINAVLLKNESQGS.

The interval 1 to 22 (MGFYQGPDNRKITGGLKGKHRD) is disordered.

It belongs to the eukaryotic ribosomal protein eS8 family. In terms of assembly, part of the 30S ribosomal subunit.

This chain is Small ribosomal subunit protein eS8, found in Saccharolobus islandicus (strain Y.N.15.51 / Yellowstone #2) (Sulfolobus islandicus).